A 175-amino-acid chain; its full sequence is Ribosome maturation factor RimM (175 aa).

One can recognise a PRC barrel domain in the interval 103 to 175; sequence EGEYYWSDLI…LLTVDWDPDF (73 aa).

The protein belongs to the RimM family. As to quaternary structure, binds ribosomal protein uS19.

Its subcellular location is the cytoplasm. Its function is as follows. An accessory protein needed during the final step in the assembly of 30S ribosomal subunit, possibly for assembly of the head region. Essential for efficient processing of 16S rRNA. May be needed both before and after RbfA during the maturation of 16S rRNA. It has affinity for free ribosomal 30S subunits but not for 70S ribosomes. The chain is Ribosome maturation factor RimM from Nitrosococcus oceani (strain ATCC 19707 / BCRC 17464 / JCM 30415 / NCIMB 11848 / C-107).